Reading from the N-terminus, the 326-residue chain is Undecaprenyl-diphosphatase (326 aa).

9 consecutive transmembrane segments (helical) span residues 11-31 (AFSL…IAVA), 42-62 (TGVI…LGFI), 90-110 (GVAF…WYFW), 138-158 (LGIG…KLLV), 165-185 (FFRS…LLAL), 212-232 (ALAL…GLFI), 242-262 (FSFL…LKGL), 272-292 (ILPL…AIAW), and 304-324 (IFVW…GMGF).

This sequence belongs to the UppP family.

The protein resides in the cell inner membrane. The enzyme catalyses di-trans,octa-cis-undecaprenyl diphosphate + H2O = di-trans,octa-cis-undecaprenyl phosphate + phosphate + H(+). Catalyzes the dephosphorylation of undecaprenyl diphosphate (UPP). Confers resistance to bacitracin. The protein is Undecaprenyl-diphosphatase of Synechocystis sp. (strain ATCC 27184 / PCC 6803 / Kazusa).